Reading from the N-terminus, the 314-residue chain is Large ribosomal subunit protein uL10 (314 aa).

The disordered stretch occupies residues 281–314 (GSTQETPEEKKEEAKKEEKSPDESISEGLGALFQ). The span at 287-302 (PEEKKEEAKKEEKSPD) shows a compositional bias: basic and acidic residues.

The protein belongs to the universal ribosomal protein uL10 family. As to quaternary structure, part of the 50S ribosomal subunit. Forms part of the ribosomal stalk which helps the ribosome interact with GTP-bound translation factors. Forms a heptameric L10(L12)2(L12)2(L12)2 complex, where L10 forms an elongated spine to which the L12 dimers bind in a sequential fashion.

Its function is as follows. Forms part of the ribosomal stalk, playing a central role in the interaction of the ribosome with GTP-bound translation factors. This is Large ribosomal subunit protein uL10 from Thermoplasma acidophilum (strain ATCC 25905 / DSM 1728 / JCM 9062 / NBRC 15155 / AMRC-C165).